A 219-amino-acid chain; its full sequence is Octanoyltransferase (219 aa).

The BPL/LPL catalytic domain maps to 24–212 (KFRRECILFL…NLNSFLGPIS (189 aa)). Substrate is bound by residues 69–76 (RGGDFTAH), 140–142 (SIG), and 153–155 (GVA). Cys171 (acyl-thioester intermediate) is an active-site residue.

This sequence belongs to the LipB family.

The protein localises to the cytoplasm. It catalyses the reaction octanoyl-[ACP] + L-lysyl-[protein] = N(6)-octanoyl-L-lysyl-[protein] + holo-[ACP] + H(+). It functions in the pathway protein modification; protein lipoylation via endogenous pathway; protein N(6)-(lipoyl)lysine from octanoyl-[acyl-carrier-protein]: step 1/2. Functionally, catalyzes the transfer of endogenously produced octanoic acid from octanoyl-acyl-carrier-protein onto the lipoyl domains of lipoate-dependent enzymes. Lipoyl-ACP can also act as a substrate although octanoyl-ACP is likely to be the physiological substrate. This Leptospira borgpetersenii serovar Hardjo-bovis (strain JB197) protein is Octanoyltransferase.